The following is a 524-amino-acid chain: Calcium-dependent protein kinase 1 (524 aa).

A disordered region spans residues 1 to 34 (MGCSQSSNVKDFKTRRSKFTNGNNYGKSGNNKNS). Gly2 is lipidated: N-myristoyl glycine. Cys3 carries the S-palmitoyl cysteine lipid modification. The short motif at 10 to 20 (KDFKTRRSKFT) is the Basic cluster involved in membrane binding element. Phosphoserine; by autocatalysis occurs at positions 17, 28, and 34. Residues 21–32 (NGNNYGKSGNNK) are compositionally biased toward low complexity. Residues 56-325 (YFKVRKLGSG…AKEALNSKWI (270 aa)) form the Protein kinase domain. Residues 62-70 (LGSGAYGEV) and Lys85 contribute to the ATP site. Ser64 carries the post-translational modification Phosphoserine; by PKG; by autocatalysis. At Thr100 the chain carries Phosphothreonine; by autocatalysis. Phosphoserine; by autocatalysis is present on Ser118. The Proton acceptor role is filled by Asp191. Ser217 carries the post-translational modification Phosphoserine. Ser220 bears the Phosphoserine; by autocatalysis mark. Thr231 carries the post-translational modification Phosphothreonine; by PKG; by autocatalysis. The residue at position 335 (Ser335) is a Phosphoserine; by autocatalysis. The short motif at 346-353 (NMRKFEGS) is the J domain autoinhibitory motif element. Residues 346 to 364 (NMRKFEGSQKLAQAAILFI) are j domain. The J domain interacts with the EF-hand domains signature appears at 354–364 (QKLAQAAILFI). EF-hand domains follow at residues 372 to 407 (EERK…LRSF), 416 to 451 (NVEE…KQIL), 452 to 487 (FSEE…TSIS), and 488 to 521 (EQMW…ICDN). Asp385, Asn387, Asp389, Gln391, Glu396, Asp429, Asp431, Asn433, Tyr435, Glu440, Asp465, Asp467, Ser469, Lys471, Glu476, Asp499, Asn501, Asp503, Met505, and Glu510 together coordinate Ca(2+).

Belongs to the protein kinase superfamily. Ser/Thr protein kinase family. CDPK subfamily. In terms of assembly, monomer. Forms a high molecular weight (250 and 400 kDa) complex. Forms a complex composed of CDPK1, PKA regulatory subunit PKAr and 14-3-3I; the complex is formed in merozoites in response to low extracellular level of K(+) and may play a role in microneme secretion. Interacts (when phosphorylated) with 14-3-3I in a Ca(2+)-independent manner; the interaction does not regulate CDPK1 catalytic activity but is required for merozoite invasion of host erythrocytes. Interacts with PKA regulatory subunit PKAr; in a Ca(2+)-dependent manner. Interacts with SERA5 p50 in the late schizont stage. Interacts with inner membrane complex protein IMC1g in late schizonts. Interacts with rhoptry protein RhopH3 in merozoites. It depends on Mg(2+) as a cofactor. Myristoylated. Myristoylation, palmitoylation and the basic cluster motif are required for the localization to the parasitophorous vacuole membrane. Post-translationally, palmitoylated. Palmitoylation increases in merozoites in response to low level of extracellular K(+) in the host blood. Myristoylation, palmitoylation and the basic cluster motif are required for the localization to the parasitophorous vacuole membrane. In terms of processing, phosphorylation at Ser-64 occurs at late schizont stage and regulates CDPK1 protein-protein interaction. Phosphorylated at Ser-28, Ser-34 and Ser-64 in merozoites in response to low extracellular level of K(+). Phosphorylation at Thr-231 may regulate CDPK1 kinase activity. Phosphorylation increases in response to an increase in intracellular Ca(2+) levels. Autophosphorylated in vitro. Autophosphorylation does not affect membrane localization in vitro.

It is found in the membrane. Its subcellular location is the cell membrane. It localises to the parasitophorous vacuole membrane. The protein localises to the cytoplasm. The protein resides in the cell projection. It is found in the cilium. Its subcellular location is the flagellum. It localises to the host cell membrane. It catalyses the reaction L-seryl-[protein] + ATP = O-phospho-L-seryl-[protein] + ADP + H(+). The catalysed reaction is L-threonyl-[protein] + ATP = O-phospho-L-threonyl-[protein] + ADP + H(+). With respect to regulation, activated by calcium. Upon calcium binding to the EF-hand domains, the C-terminus of the junction domain (J domain) undergoes a conformational change which results in the dissociation of the pseudo-substrate inhibitory motif from the catalytic domain. This, in turn may facilitate the autophosphorylation of the activation loop at Thr-231, which leads to the kinase activation. May be negatively regulated by PKA-mediated phosphorylation. Inhibited by purfalcamine. Its function is as follows. Calcium-dependent protein kinase which acts as a sensor and effector of intracellular Ca(2+) levels probably in part downstream of cGMP-activated PKG kinase. By phosphorylating various proteins, required for microneme secretion and thus merozoite egress from and invasion of host erythrocytes. During gametogenesis, essential for the development of both male and female gametes. Phosphorylates SERA5 p50 which enhances SERA5 p50 protease activity; however, SERA5 p50 protease activity has been shown in other studies to be controversial. Probably by phosphorylating SERA5 p50, plays a role in merozoite egress from host erythrocytes. Probably prior or during merozoite invasion of host erythrocytes, phosphorylates rhoptry protein RhopH3 which is required for RhopH3 localization to rhoptries and for its secretion. Probably in late schizonts, phosphorylates myosin A tail domain-interacting protein MTIP and glideosome-associated protein 45 GAP45, both of which are components of the motor complex that generates the force required by the parasite to invade host cells. In late schizonts, phosphorylates inner membrane complex protein IMC1g. In late schizonts, phosphorylates PKA regulatory subunit PKAr in a calcium-dependent manner, which may contribute to the dissociation of regulatory PKAr and catalytic PKAc subunits and promote the activation of PKAc. May phosphorylate raf kinase inhibitory protein RKIP which in turn may regulate CDPK1 catalytic activity. May phosphorylate proteins of the host erythrocyte membranes. The protein is Calcium-dependent protein kinase 1 of Plasmodium falciparum (isolate 3D7).